We begin with the raw amino-acid sequence, 220 residues long: Protein DGCR6L (220 aa).

The stretch at 76–159 (KSLYNQRLRL…ADQQSTLEKA (84 aa)) forms a coiled coil.

This sequence belongs to the gonadal family. As to expression, widely expressed in fetal and adult tissues. Highest expression in liver, heart and skeletal muscle. Lower levels in pancreas and placenta. Weak expression in brain.

The protein resides in the nucleus. May play a role in neural crest cell migration into the third and fourth pharyngeal pouches. This Homo sapiens (Human) protein is Protein DGCR6L (DGCR6L).